A 199-amino-acid chain; its full sequence is MKFSPLLDELIQSLRCLPGVGPKSAQRMAFQLLERDRKAGLKLASALSSAMSDVGHCQSCRTYTEETLCPICTSHKRGTSSTICVVETPADVLAIEAGGHFTGRYFVLLGHLSPLDGVGPEELGLALLERHLASGDVAELILATNPTVEGEATAHFIADMARRHKVMISRIAHGVPVGGELEYVDSTTLALSFNGRLPL.

The C4-type zinc finger occupies 57-72; the sequence is CQSCRTYTEETLCPIC. A Toprim domain is found at 81–176; sequence STICVVETPA…MISRIAHGVP (96 aa).

The protein belongs to the RecR family.

In terms of biological role, may play a role in DNA repair. It seems to be involved in an RecBC-independent recombinational process of DNA repair. It may act with RecF and RecO. This chain is Recombination protein RecR, found in Shewanella baltica (strain OS155 / ATCC BAA-1091).